We begin with the raw amino-acid sequence, 275 residues long: 2,3,4,5-tetrahydropyridine-2,6-dicarboxylate N-succinyltransferase (275 aa).

2 residues coordinate substrate: arginine 106 and aspartate 143.

Belongs to the transferase hexapeptide repeat family. As to quaternary structure, homotrimer.

Its subcellular location is the cytoplasm. It carries out the reaction (S)-2,3,4,5-tetrahydrodipicolinate + succinyl-CoA + H2O = (S)-2-succinylamino-6-oxoheptanedioate + CoA. It functions in the pathway amino-acid biosynthesis; L-lysine biosynthesis via DAP pathway; LL-2,6-diaminopimelate from (S)-tetrahydrodipicolinate (succinylase route): step 1/3. The chain is 2,3,4,5-tetrahydropyridine-2,6-dicarboxylate N-succinyltransferase from Pelagibacter ubique (strain HTCC1062).